Here is an 895-residue protein sequence, read N- to C-terminus: Pyruvate dehydrogenase E1 component (895 aa).

The disordered stretch occupies residues 1–20; that stretch reads MSAVPEQILGASSANDADPQ.

In terms of assembly, homodimer. Part of the PDH complex, consisting of multiple copies of pyruvate dehydrogenase (E1), dihydrolipoamide acetyltransferase (E2) and lipoamide dehydrogenase (E3). It depends on thiamine diphosphate as a cofactor.

The enzyme catalyses N(6)-[(R)-lipoyl]-L-lysyl-[protein] + pyruvate + H(+) = N(6)-[(R)-S(8)-acetyldihydrolipoyl]-L-lysyl-[protein] + CO2. Functionally, component of the pyruvate dehydrogenase (PDH) complex, that catalyzes the overall conversion of pyruvate to acetyl-CoA and CO(2). The sequence is that of Pyruvate dehydrogenase E1 component (pdhA) from Cupriavidus necator (strain ATCC 17699 / DSM 428 / KCTC 22496 / NCIMB 10442 / H16 / Stanier 337) (Ralstonia eutropha).